The primary structure comprises 145 residues: Transmembrane protein 216 (145 aa).

A run of 4 helical transmembrane segments spans residues 22–42, 56–76, 89–109, and 122–142; these read ILFF…LFIF, LVLD…RLFF, LSIS…YLLL, and GILL…LAAF.

As to quaternary structure, part of the tectonic-like complex (also named B9 complex). Interacts with TMEM107.

The protein localises to the membrane. It is found in the cytoplasm. It localises to the cytoskeleton. The protein resides in the cilium basal body. Its function is as follows. Part of the tectonic-like complex which is required for tissue-specific ciliogenesis and may regulate ciliary membrane composition. The chain is Transmembrane protein 216 (TMEM216) from Homo sapiens (Human).